A 309-amino-acid chain; its full sequence is Probable MRF1 mitochondrial N(5)-glutamine methyltransferase mtq1 (309 aa).

Residues 124–128 (CTGSG), Asp-148, and Asn-200 contribute to the S-adenosyl-L-methionine site. A substrate-binding site is contributed by 200-203 (NPPY).

The protein belongs to the protein N5-glutamine methyltransferase family.

The protein localises to the mitochondrion. The catalysed reaction is L-glutaminyl-[peptide chain release factor] + S-adenosyl-L-methionine = N(5)-methyl-L-glutaminyl-[peptide chain release factor] + S-adenosyl-L-homocysteine + H(+). Its function is as follows. Methylates MRF1 on 'Gln-270' using S-adenosyl L-methionine as methyl donor. The polypeptide is Probable MRF1 mitochondrial N(5)-glutamine methyltransferase mtq1 (mtq1) (Schizosaccharomyces pombe (strain 972 / ATCC 24843) (Fission yeast)).